The following is a 465-amino-acid chain: U4/U6 small nuclear ribonucleoprotein PRP4 (465 aa).

WD repeat units lie at residues 173–212 (VSTK…PLTQ), 216–256 (SHVG…GGLR), 263–302 (GHER…ELLL), 305–344 (GHDK…KVMT), 347–386 (GHSK…EGQL), 391–432 (AHRN…KMGS), and 435–464 (GHTD…IKLW).

As to quaternary structure, component of the U4/U6-U5 tri-snRNP complex composed of the U4, U6 and U5 snRNAs and at least PRP3, PRP4, PRP6, PRP8, PRP18, PRP31, PRP38, SNU13, SNU23, SNU66, SNU114, SPP381, SMB1, SMD1, SMD2, SMD3, SMX2, SMX3, LSM2, LSM3, LSM4, LSM5, LSM6, LSM7, LSM8, BRR2 and DIB1.

The protein resides in the nucleus. In terms of biological role, involved in RNA splicing. Is required for the association of U4/U6 snRNP with U5 snRNP in an early step of spliceosome assembly. In Saccharomyces cerevisiae (strain ATCC 204508 / S288c) (Baker's yeast), this protein is U4/U6 small nuclear ribonucleoprotein PRP4 (PRP4).